The following is a 179-amino-acid chain: Large ribosomal subunit protein uL10 (179 aa).

This sequence belongs to the universal ribosomal protein uL10 family. As to quaternary structure, part of the ribosomal stalk of the 50S ribosomal subunit. The N-terminus interacts with L11 and the large rRNA to form the base of the stalk. The C-terminus forms an elongated spine to which L12 dimers bind in a sequential fashion forming a multimeric L10(L12)X complex.

Its function is as follows. Forms part of the ribosomal stalk, playing a central role in the interaction of the ribosome with GTP-bound translation factors. The polypeptide is Large ribosomal subunit protein uL10 (Thermotoga petrophila (strain ATCC BAA-488 / DSM 13995 / JCM 10881 / RKU-1)).